A 174-amino-acid chain; its full sequence is 2-oxo-4-hydroxy-4-carboxy-5-ureidoimidazoline decarboxylase (174 aa).

Catalysis depends on histidine 67, which acts as the Proton donor. Substrate-binding positions include proline 68, 84–88, and 119–123; these read SQEEQ and FVICA. A Microbody targeting signal motif is present at residues 172–174; it reads TKL.

This sequence belongs to the OHCU decarboxylase family. As to quaternary structure, homodimer.

Its subcellular location is the peroxisome. The enzyme catalyses 5-hydroxy-2-oxo-4-ureido-2,5-dihydro-1H-imidazole-5-carboxylate + H(+) = (S)-allantoin + CO2. It functions in the pathway purine metabolism; urate degradation; (S)-allantoin from urate: step 3/3. Catalyzes the stereoselective decarboxylation of 2-oxo-4-hydroxy-4-carboxy-5-ureidoimidazoline (OHCU) to (S)-allantoin. The sequence is that of 2-oxo-4-hydroxy-4-carboxy-5-ureidoimidazoline decarboxylase (urad) from Danio rerio (Zebrafish).